The chain runs to 498 residues: L-ornithine N(5)-monooxygenase (498 aa).

FAD contacts are provided by residues 80–88 (ERQKQFAWH) and Q99. K104 is a binding site for substrate. V165 provides a ligand contact to FAD. Residues 251–254 (SGQS) and R276 contribute to the NADP(+) site. Substrate-binding positions include 290–293 (NEVF) and N320. 320–322 (NYS) contacts NADP(+). 463–465 (SLL) contributes to the FAD binding site. Position 466 (S466) interacts with substrate.

The protein belongs to the lysine N(6)-hydroxylase/L-ornithine N(5)-oxygenase family. In terms of assembly, homotetramer. It depends on FAD as a cofactor.

It catalyses the reaction L-ornithine + NADPH + O2 = N(5)-hydroxy-L-ornithine + NADP(+) + H2O. The catalysed reaction is L-ornithine + NADH + O2 = N(5)-hydroxy-L-ornithine + NAD(+) + H2O. Its pathway is siderophore biosynthesis. Catalyzes the conversion of L-ornithine to N(5)-hydroxyornithine, the first step in the biosynthesis of all hydroxamate-containing siderophores, such as the secreted triacetylfusarinine C (TAFC) involved in iron uptake and the intracellular iron storage compound desferriferricrocin (DFFC). The chain is L-ornithine N(5)-monooxygenase from Emericella nidulans (strain FGSC A4 / ATCC 38163 / CBS 112.46 / NRRL 194 / M139) (Aspergillus nidulans).